A 37-amino-acid chain; its full sequence is Large ribosomal subunit protein bL36c (37 aa).

The protein belongs to the bacterial ribosomal protein bL36 family.

Its subcellular location is the plastid. The protein localises to the chloroplast. In Oenothera argillicola (Appalachian evening primrose), this protein is Large ribosomal subunit protein bL36c.